A 449-amino-acid polypeptide reads, in one-letter code: Hyaluronidase-1 (449 aa).

The signal sequence occupies residues 1-23 (MYHLWIKCLAAWIFLKRCNGVHA). Cystine bridges form between Cys47–Cys340 and Cys211–Cys227. N-linked (GlcNAc...) asparagine glycans are attached at residues Asn67, Asn103, and Asn111. The Proton donor role is filled by Glu135. N-linked (GlcNAc...) asparagine glycosylation is present at Asn153. The N-linked (GlcNAc...) asparagine glycan is linked to Asn357. 3 disulfide bridges follow: Cys365/Cys376, Cys370/Cys427, and Cys429/Cys438. Asn401 carries N-linked (GlcNAc...) asparagine glycosylation. Positions 427 to 438 (CQCYQGWKGLYC) constitute an EGF-like domain.

Belongs to the glycosyl hydrolase 56 family. Monomer. As to expression, expressed by the venom gland.

Its subcellular location is the secreted. It carries out the reaction Random hydrolysis of (1-&gt;4)-linkages between N-acetyl-beta-D-glucosamine and D-glucuronate residues in hyaluronate.. In terms of biological role, snake venom endo-hyaluronidase that degrades hyaluronan to smaller oligosaccharide fragments. In venom, it is not toxic by itself, but increases the diffusion of other venom proteins by degrading the extracellular matrix. In addition, it displays antiedematogenic activity. The chain is Hyaluronidase-1 from Bitis arietans (African puff adder).